The primary structure comprises 494 residues: UPF0371 protein STER_1332 (494 aa).

Belongs to the UPF0371 family.

In Streptococcus thermophilus (strain ATCC BAA-491 / LMD-9), this protein is UPF0371 protein STER_1332.